The sequence spans 609 residues: Glutamine--fructose-6-phosphate aminotransferase [isomerizing] (609 aa).

The Nucleophile; for GATase activity role is filled by Cys-2. The region spanning 2–219 is the Glutamine amidotransferase type-2 domain; it reads CGIVGYIGGR…DGECARLTRD (218 aa). SIS domains follow at residues 285–424 and 458–599; these read SSDL…LRGT and LARE…VDQP. Lys-604 functions as the For Fru-6P isomerization activity in the catalytic mechanism.

In terms of assembly, homodimer.

The protein resides in the cytoplasm. It catalyses the reaction D-fructose 6-phosphate + L-glutamine = D-glucosamine 6-phosphate + L-glutamate. Its function is as follows. Catalyzes the first step in hexosamine metabolism, converting fructose-6P into glucosamine-6P using glutamine as a nitrogen source. The protein is Glutamine--fructose-6-phosphate aminotransferase [isomerizing] of Gloeobacter violaceus (strain ATCC 29082 / PCC 7421).